The following is a 130-amino-acid chain: Protein CPn_0713/CP_0033/CPj0713/CpB0740 (130 aa).

The protein belongs to the chlamydial CPn_0713/CT_663/TC_0034 family.

This Chlamydia pneumoniae (Chlamydophila pneumoniae) protein is Protein CPn_0713/CP_0033/CPj0713/CpB0740.